The chain runs to 118 residues: Aspartate 1-decarboxylase (118 aa).

The active-site Schiff-base intermediate with substrate; via pyruvic acid is Ser25. Ser25 carries the pyruvic acid (Ser) modification. Thr57 provides a ligand contact to substrate. Tyr58 (proton donor) is an active-site residue. Residue 73 to 75 (GAA) participates in substrate binding.

It belongs to the PanD family. In terms of assembly, heterooctamer of four alpha and four beta subunits. The cofactor is pyruvate. In terms of processing, is synthesized initially as an inactive proenzyme, which is activated by self-cleavage at a specific serine bond to produce a beta-subunit with a hydroxyl group at its C-terminus and an alpha-subunit with a pyruvoyl group at its N-terminus.

The protein localises to the cytoplasm. The enzyme catalyses L-aspartate + H(+) = beta-alanine + CO2. It functions in the pathway cofactor biosynthesis; (R)-pantothenate biosynthesis; beta-alanine from L-aspartate: step 1/1. Its function is as follows. Catalyzes the pyruvoyl-dependent decarboxylation of aspartate to produce beta-alanine. In Leptospira biflexa serovar Patoc (strain Patoc 1 / Ames), this protein is Aspartate 1-decarboxylase.